The primary structure comprises 335 residues: NmrA-like family domain-containing oxidoreductase ptmS (335 aa).

Residues glycine 12 to glutamine 17, arginine 39 to serine 43, aspartate 60 to glycine 61, isoleucine 81 to phenylalanine 88, lysine 139, and phenylalanine 163 to asparagine 166 each bind NADP(+). Positions glycine 161–serine 206 are interaction with ASS1.

This sequence belongs to the NmrA-type oxidoreductase family.

It functions in the pathway secondary metabolite biosynthesis. Its function is as follows. NmrA-like family domain-containing oxidoreductase; part of the gene cluster that mediates the biosynthesis of the indole diterpenes penitrems. The geranylgeranyl diphosphate (GGPP) synthase ptmG catalyzes the first step in penitrem biosynthesis via conversion of farnesyl pyrophosphate and isopentyl pyrophosphate into geranylgeranyl pyrophosphate (GGPP). Condensation of indole-3-glycerol phosphate with GGPP by the prenyl transferase ptmC then forms 3-geranylgeranylindole (3-GGI). Epoxidation by the FAD-dependent monooxygenase ptmM leads to a epoxidized-GGI that is substrate of the terpene cyclase ptmB for cyclization to yield paspaline. Paspaline is subsequently converted to 13-desoxypaxilline by the cytochrome P450 monooxygenase ptmP, the latter being then converted to paxilline by the cytochrome P450 monooxygenase ptmQ. Paxilline is converted to beta-paxitriol via C-10 ketoreduction by the short-chain dehydrogenase ptmH which can be monoprenylated at the C-20 by the indole diterpene prenyltransferase ptmD. A two-step elimination (acetylation and elimination) process performed by the O-acetyltransferase ptmV and ptmI leads to the production of the prenylated form of penijanthine. The FAD-linked oxidoreductase ptmO then converts the prenylated form of penijanthine into PC-M5 which is in turn transformed into PC-M4 by the aromatic dimethylallyltransferase ptmE. Five sequential oxidative transformations performed by the cytochrome P450 monooxygenases ptmK, ptmU, ptmL, ptmN and ptmJ yield the various penitrem compounds. PtmK, ptmU and ptmM are involved in the formation of the key bicyclic ring of penitrem C via the formation of the intermediates secopenitrem D and penitrem D. PtmL catalyzes the epoxidation of penitrem D and C to yield penitrem B and F, respectively. PtmJ catalyzes the last benzylic hydroxylation to convert penitrem B to prenitrem E and penitrem F to penitrem A. This chain is NmrA-like family domain-containing oxidoreductase ptmS, found in Penicillium ochrochloron.